A 29-amino-acid chain; its full sequence is Amelogenin-like protein (29 aa).

At Ser16 the chain carries Phosphoserine.

It belongs to the amelogenin family.

It is found in the secreted. The protein resides in the extracellular space. The protein localises to the extracellular matrix. Tooth enamel proteins are produced in ameloblasts and play a role in biomineralization. The sequence is that of Amelogenin-like protein (AMEL) from Oryctolagus cuniculus (Rabbit).